A 153-amino-acid polypeptide reads, in one-letter code: Ribosomal RNA large subunit methyltransferase H (153 aa).

Residues Leu75, Gly102, and Leu121 to Leu126 contribute to the S-adenosyl-L-methionine site.

This sequence belongs to the RNA methyltransferase RlmH family. Homodimer.

Its subcellular location is the cytoplasm. It carries out the reaction pseudouridine(1915) in 23S rRNA + S-adenosyl-L-methionine = N(3)-methylpseudouridine(1915) in 23S rRNA + S-adenosyl-L-homocysteine + H(+). In terms of biological role, specifically methylates the pseudouridine at position 1915 (m3Psi1915) in 23S rRNA. In Campylobacter jejuni (strain RM1221), this protein is Ribosomal RNA large subunit methyltransferase H.